Consider the following 184-residue polypeptide: MSRRNKRSRRRRKKPLNTIQPGPSKPSAQDEPIKSVSHHSSKIGTNPMLAFILGGNEDLSDDSDWDEDFSLENTLMPLNEVSLKGKHDSKHFNKGFDNNTALHEVNTKWEAFYSSVKIRQRDVKVYFATDDILIKVREADDIDRKGPWEQAAVDRLRFQRRIADTEKILSAVLLRKKLNPMEHE.

Residues 1–15 (MSRRNKRSRRRRKKP) show a composition bias toward basic residues. The segment at 1–41 (MSRRNKRSRRRRKKPLNTIQPGPSKPSAQDEPIKSVSHHSS) is disordered. Important for host CHOP inhibition regions lie at residues 125 to 127 (VYF) and 169 to 173 (LSAVL).

It belongs to the asfivirus DP71L family. Interacts (via C-terminus) with host PPP1CB.

In terms of biological role, interacts with the host phosphatase PP1 catalytic subunit (PPP1CB) and recruits it to dephosphorylate EIF2S1/eIF2alpha and therefore restores the host translation that has been shut-down by the host. Also inhibits the EIF2S1/eIF2alpha-ATF4-DDIT3/CHOP pathway. In Ornithodoros (relapsing fever ticks), this protein is Protein DP71L.